We begin with the raw amino-acid sequence, 530 residues long: Metal transporter Nramp2 (530 aa).

The segment at Met1–Ala35 is disordered. Transmembrane regions (helical) follow at residues Leu68–Leu88, Ala96–Ile116, Leu153–Leu173, Phe177–Leu197, Leu205–Gly225, Ala251–Val271, Val297–Phe317, Phe339–Gln359, Ile395–Leu415, Trp418–Val438, Ile456–Phe476, and Leu484–Ile504.

This sequence belongs to the NRAMP (TC 2.A.55) family.

Its subcellular location is the membrane. Functionally, seems to be involved in iron uptake. This is Metal transporter Nramp2 (NRAMP2) from Arabidopsis thaliana (Mouse-ear cress).